The sequence spans 176 residues: RNA pyrophosphohydrolase (176 aa).

Positions 6 to 149 (GYRPNVGIIL…KRQVYQQALF (144 aa)) constitute a Nudix hydrolase domain. The Nudix box motif lies at 38-59 (GGIKHGESPEQAMFRELFEEVG).

The protein belongs to the Nudix hydrolase family. RppH subfamily. A divalent metal cation is required as a cofactor.

In terms of biological role, accelerates the degradation of transcripts by removing pyrophosphate from the 5'-end of triphosphorylated RNA, leading to a more labile monophosphorylated state that can stimulate subsequent ribonuclease cleavage. This is RNA pyrophosphohydrolase from Aromatoleum aromaticum (strain DSM 19018 / LMG 30748 / EbN1) (Azoarcus sp. (strain EbN1)).